We begin with the raw amino-acid sequence, 72 residues long: MAKEEMLEFPGVVKELLPNATFRVELENGHEIIAHMAGKMRKNRIRVLAGDKVQVEMNTYDLTKGRINYRFK.

The S1-like domain maps to 1–72 (MAKEEMLEFP…TKGRINYRFK (72 aa)).

Belongs to the IF-1 family. Component of the 30S ribosomal translation pre-initiation complex which assembles on the 30S ribosome in the order IF-2 and IF-3, IF-1 and N-formylmethionyl-tRNA(fMet); mRNA recruitment can occur at any time during PIC assembly.

It localises to the cytoplasm. In terms of biological role, one of the essential components for the initiation of protein synthesis. Stabilizes the binding of IF-2 and IF-3 on the 30S subunit to which N-formylmethionyl-tRNA(fMet) subsequently binds. Helps modulate mRNA selection, yielding the 30S pre-initiation complex (PIC). Upon addition of the 50S ribosomal subunit IF-1, IF-2 and IF-3 are released leaving the mature 70S translation initiation complex. The polypeptide is Translation initiation factor IF-1 (Paracoccus denitrificans (strain Pd 1222)).